A 473-amino-acid polypeptide reads, in one-letter code: Ribulose bisphosphate carboxylase large chain 2 (473 aa).

Positions 116 and 166 each coordinate substrate. The active-site Proton acceptor is Lys-168. Lys-170 is a binding site for substrate. The Mg(2+) site is built by Lys-194, Asp-196, and Glu-197. Lys-194 bears the N6-carboxylysine mark. His-287 acts as the Proton acceptor in catalysis. 3 residues coordinate substrate: Arg-288, His-320, and Ser-372.

The protein belongs to the RuBisCO large chain family. Type I subfamily. In terms of assembly, heterohexadecamer of 8 large chains and 8 small chains. Mg(2+) serves as cofactor.

It carries out the reaction 2 (2R)-3-phosphoglycerate + 2 H(+) = D-ribulose 1,5-bisphosphate + CO2 + H2O. It catalyses the reaction D-ribulose 1,5-bisphosphate + O2 = 2-phosphoglycolate + (2R)-3-phosphoglycerate + 2 H(+). Functionally, ruBisCO catalyzes two reactions: the carboxylation of D-ribulose 1,5-bisphosphate, the primary event in carbon dioxide fixation, as well as the oxidative fragmentation of the pentose substrate. Both reactions occur simultaneously and in competition at the same active site. This Cereibacter sphaeroides (strain ATCC 17025 / ATH 2.4.3) (Rhodobacter sphaeroides) protein is Ribulose bisphosphate carboxylase large chain 2.